The following is a 320-amino-acid chain: Cytochrome f (320 aa).

The N-terminal stretch at 1–32 (MKTKKSYDKVTRWVTPPILMLIIIHIITGACS) is a signal peptide. 4 residues coordinate heme: Tyr36, Cys56, Cys59, and His60. Residues 286 to 306 (IQGLLGFLASVVLAQIFLVLK) traverse the membrane as a helical segment.

It belongs to the cytochrome f family. The 4 large subunits of the cytochrome b6-f complex are cytochrome b6, subunit IV (17 kDa polypeptide, petD), cytochrome f and the Rieske protein, while the 4 small subunits are PetG, PetL, PetM and PetN. The complex functions as a dimer. It depends on heme as a cofactor.

It localises to the plastid. It is found in the chloroplast thylakoid membrane. Its function is as follows. Component of the cytochrome b6-f complex, which mediates electron transfer between photosystem II (PSII) and photosystem I (PSI), cyclic electron flow around PSI, and state transitions. The chain is Cytochrome f from Gnetum parvifolium (Small-leaved jointfir).